Reading from the N-terminus, the 570-residue chain is Glutamate--tRNA ligase (570 aa).

The 'HIGH' region motif lies at 107–117; the sequence is PNPDFVLHLGS.

The protein belongs to the class-I aminoacyl-tRNA synthetase family. Glutamate--tRNA ligase type 2 subfamily.

It localises to the cytoplasm. It carries out the reaction tRNA(Glu) + L-glutamate + ATP = L-glutamyl-tRNA(Glu) + AMP + diphosphate. Catalyzes the attachment of glutamate to tRNA(Glu) in a two-step reaction: glutamate is first activated by ATP to form Glu-AMP and then transferred to the acceptor end of tRNA(Glu). In Pyrobaculum aerophilum (strain ATCC 51768 / DSM 7523 / JCM 9630 / CIP 104966 / NBRC 100827 / IM2), this protein is Glutamate--tRNA ligase.